The chain runs to 322 residues: Secretion system apparatus protein SsaQ (322 aa).

Belongs to the FliN/MopA/SpaO family.

Functionally, part of a type III secretion system. This Salmonella typhimurium (strain LT2 / SGSC1412 / ATCC 700720) protein is Secretion system apparatus protein SsaQ (ssaQ).